Here is a 1259-residue protein sequence, read N- to C-terminus: MVRLREIPRTATFAWSPGAASPLIATGTRAGAVDVDFSNQTCLELWDLALSRHETGGELQPVAKIDTDSGFNDLAWTESEDNSRGVIAGALENGSLDLWDADKLLNGSDDAVISRTSKHSGAVKALQFNPKHSNLLATGGAKGELYISDLDNIANPYRLGGTAARADDIECLDWNKKVAHILVTGSSAGFVTVWDVKTKKESLTLNNMGRKAVSAVAWDPEKPTKLVTATPLESDPLICVWDLRNSHAPERTLRGHESGVLSLSWCAQDPDLLLSSGKDNRTMCWNPQTGHAYGEFPVVTNWTFQTRWNPHNPNFFATASFDGKISIQTIQNTSTETAQAIADQNQALDGEDFFAKAQTQPQVSSFSLPKPPKWLERPCSATFGFGGRVVSVNLVEKGQRASKIKITPFEVDEAVGKSTETFETALKEGDLRSICESRAANAGSDEEKADWKVIEALISKDPRKGLVEYLGFADQADEAADSLSKLGLDKEEEVNGEVAKESRGSGAKKHRRLQSMFDANPEADSFLSDLAASKGAKTNNPFHIFNGSENEADTGITRALLLGDFEKALDVALKEDRLSDAFMIAICGGPKCIEKAQEHYFQKQTNSPNYVRLLASIVGKNLWDVVYNADLSNWKEVMAALCTFADEKDFADLCEALGDRLEEELRNNEDKGMRKDASFCFLAGSKLEKVVAIWIEELREHEQKAIETAADDSAFSIHVRALQGLIEKVTIFRQVTKFEDTERTKESDWKLSTLYDKYIEYADVVATHGRLQVAQKYLDLVPEKHPEAEIARNRIKLATRQATPQRTQPAAATVTRAALNKPLPQPNAFQPQRAYSPATPAAVPSPYAPAAAAANAYAPPTTATNPYAPSTASAPAQPVNPYAPPAGGSSYTPAGYQPPKAPAYGAQPLGGGVPPPPRASNQSPAPTVTTYTTATNLPAWNDLPEGFAKAPTPRRSTPAAATVASPFPNQSPTLTQGPPPPAGQRAPSVPPPPKGTAPPPRMTSPPAAQPASTTMPPPPANPYASLPQSPPMASTMGVPASIPRGPSPYNAPPTMPPPPNRYAPSPAAQAASPQLQTRAPVPPPPQAAASPYAPQPPAAGHYVPSTPPPHVQPPPQQAPPPQAAPGSRPSTASSQKKPAPAPPKYPPGDRSHIPADAMPVYEILSADMQRVKSRAPSSFKAQVDDAERRLNILFDHLNNEDLLKPNTIADMAELARAIQARDYETARTIHVDIMTNRLDECGNWMVGVKRLISMSRATP.

7 WD repeats span residues 5 to 47 (REIP…ELWD), 66 to 109 (DTDS…NGSD), 118 to 158 (KHSG…NPYR), 164 to 204 (ARAD…ESLT), 208 to 251 (MGRK…APER), 255 to 295 (GHES…AYGE), and 298 to 338 (VVTN…TETA). One copy of the WD 8; interaction with sec13 repeat lies at 382–407 (TFGFGGRVVSVNLVEKGQRASKIKIT). Disordered regions lie at residues 822 to 845 (PLPQ…AVPS) and 868 to 1154 (APST…SHIP). Composition is skewed to low complexity over residues 834–845 (AYSPATPAAVPS), 924–939 (PAPT…NLPA), and 950–968 (APTP…SPFP). Pro residues predominate over residues 977–1003 (GPPPPAGQRAPSVPPPPKGTAPPPRMT). The span at 1004-1014 (SPPAAQPASTT) shows a compositional bias: low complexity. Positions 1045–1061 (GPSPYNAPPTMPPPPNR) are enriched in pro residues. The span at 1062 to 1079 (YAPSPAAQAASPQLQTRA) shows a compositional bias: low complexity. Positions 1105-1123 (STPPPHVQPPPQQAPPPQA) are enriched in pro residues. A compositionally biased stretch (low complexity) spans 1129–1138 (PSTASSQKKP).

Belongs to the WD repeat SEC31 family. In terms of assembly, the COPII coat is composed of at least 5 proteins: the sec23/24 complex, the sec13/31 complex, and the protein sar1. sec13 and sec31 make a 2:2 tetramer that forms the edge element of the COPII outer coat. The tetramer self-assembles in multiple copies to form the complete polyhedral cage. Interacts (via WD 8) with sec13.

The protein localises to the cytoplasmic vesicle. Its subcellular location is the COPII-coated vesicle membrane. The protein resides in the endoplasmic reticulum membrane. Its function is as follows. Component of the coat protein complex II (COPII) which promotes the formation of transport vesicles from the endoplasmic reticulum (ER). The coat has two main functions, the physical deformation of the endoplasmic reticulum membrane into vesicles and the selection of cargo molecules. In Aspergillus niger (strain ATCC MYA-4892 / CBS 513.88 / FGSC A1513), this protein is Protein transport protein sec31 (sec31).